A 253-amino-acid chain; its full sequence is Ribosome-inactivating protein saporin-7 (253 aa).

Residue glutamate 176 is part of the active site.

Belongs to the ribosome-inactivating protein family. Type 1 RIP subfamily.

It catalyses the reaction Endohydrolysis of the N-glycosidic bond at one specific adenosine on the 28S rRNA.. Functionally, ribosome-inactivating protein of type 1, inhibits protein synthesis in animal cells. The sequence is that of Ribosome-inactivating protein saporin-7 (SAP7) from Saponaria officinalis (Common soapwort).